Consider the following 479-residue polypeptide: MNFETVIGLEIHAELKSKTKIFCSCSTKFGAEPNANTCPICTGVPGTLPVLNEEVVNLAIKAGTALGCTINKYNKMDRKNYFYPDLPKNYQTSQFDMPICSGGLVEFEHEGKEVKVRLNRIHIEEDAGKLVHVEGEPISLVDYNRVGVPLAEIVTEPDLRSVSEAVAFMKKLKSILEYGEISDCRMEQGSLRCDANISLRPVGQKEFGLRVELKNINSFRELQKALEKEERRQRELYTYGEGHKIVQETRRWDAAKGKTIPMRSKEEADDYRYVVEPDLPPIIIYDEQIETITKSLPEMPDEKKERFLTAYELSEKEVDILIGDKGLATFFEKVVELGATPKIASNWILGDILRILNDRKIESEDMHIEAENFAKLLKVVEEGKISNNVGREVLDEIFDENKDPMKVIEEKGLMQISSSDELEKIVAEVIANNPQSVEDFKAGKTQSAGFLMGQVMKLSKGKANPKVAKELVDKKLSEI.

It belongs to the GatB/GatE family. GatB subfamily. Heterotrimer of A, B and C subunits.

It carries out the reaction L-glutamyl-tRNA(Gln) + L-glutamine + ATP + H2O = L-glutaminyl-tRNA(Gln) + L-glutamate + ADP + phosphate + H(+). It catalyses the reaction L-aspartyl-tRNA(Asn) + L-glutamine + ATP + H2O = L-asparaginyl-tRNA(Asn) + L-glutamate + ADP + phosphate + 2 H(+). Its function is as follows. Allows the formation of correctly charged Asn-tRNA(Asn) or Gln-tRNA(Gln) through the transamidation of misacylated Asp-tRNA(Asn) or Glu-tRNA(Gln) in organisms which lack either or both of asparaginyl-tRNA or glutaminyl-tRNA synthetases. The reaction takes place in the presence of glutamine and ATP through an activated phospho-Asp-tRNA(Asn) or phospho-Glu-tRNA(Gln). In Clostridium beijerinckii (strain ATCC 51743 / NCIMB 8052) (Clostridium acetobutylicum), this protein is Aspartyl/glutamyl-tRNA(Asn/Gln) amidotransferase subunit B.